An 894-amino-acid polypeptide reads, in one-letter code: Pentatricopeptide repeat-containing protein At1g19720 (894 aa).

PPR repeat units lie at residues 80-110 (KRSTYLKLLESCIDSGSIHLGRILHARFGLF), 114-144 (DVFVETKLLSMYAKCGCIADARKVFDSMRER), 145-179 (NLFTWSAMIGAYSRENRWREVAKLFRLMMKDGVLP), 180-214 (DDFLFPKILQGCANCGDVEAGKVIHSVVIKLGMSS), 215-245 (CLRVSNSILAVYAKCGELDFATKFFRRMRER), 246-280 (DVIAWNSVLLAYCQNGKHEEAVELVKEMEKEGISP), 281-315 (GLVTWNILIGGYNQLGKCDAAMDLMQKMETFGITA), 316-350 (DVFTWTAMISGLIHNGMRYQALDMFRKMFLAGVVP), 351-385 (NAVTIMSAVSACSCLKVINQGSEVHSIAVKMGFID), 386-416 (DVLVGNSLVDMYSKCGKLEDARKVFDSVKNK), 417-451 (DVYTWNSMITGYCQAGYCGKAYELFTRMQDANLRP), 452-486 (NIITWNTMISGYIKNGDEGEAMDLFQRMEKDGKVQ), 488-522 (NTATWNLIIAGYIQNGKKDEALELFRKMQFSRFMP), 523-557 (NSVTILSLLPACANLLGAKMVREIHGCVLRRNLDA), 558-588 (IHAVKNALTDTYAKSGDIEYSRTIFLGMETK), 589-623 (DIITWNSLIGGYVLHGSYGPALALFNQMKTQGITP), 624-659 (NRGTLSSIILAHGLMGNVDEGKKVFYSIANDYHIIP), and 660-694 (ALEHCSAMVYLYGRANRLEEALQFIQEMNIQSETP). The tract at residues 695–770 (IWESFLTGCR…PLGQSWIEVR (76 aa)) is type E motif. The tract at residues 771–801 (NLIHTFTTGDQSKLCTDVLYPLVEKMSRLDN) is type E(+) motif. The segment at 803–894 (SDQYNGELWI…NGDCSCKDYW (92 aa)) is type DYW motif.

The protein belongs to the PPR family. PCMP-H subfamily.

This is Pentatricopeptide repeat-containing protein At1g19720 (DYW7) from Arabidopsis thaliana (Mouse-ear cress).